Consider the following 448-residue polypeptide: Gamete and mating-type specific protein A (448 aa).

The N-terminal stretch at 1–19 (MKLILVLLCLISTLFVVKG) is a signal peptide. One can recognise an SCP domain in the interval 30–157 (VSYHNKWRSS…PDKSEVSCSY (128 aa)). N-linked (GlcNAc...) asparagine glycosylation is found at asparagine 55, asparagine 98, and asparagine 119. Residues 171–242 (PKTTTPAPTT…PTTPAPTSTL (72 aa)) form a disordered region. The segment covering 178–236 (PTTPAPTTPKPTTPAPTTPKPTTPAPTTPKPTTPAPTTPKPTTPAPTTPKPTTPAPTTP) has biased composition (pro residues). Catalysis depends on residues cysteine 262, histidine 397, and asparagine 415.

This sequence belongs to the peptidase C1 family.

It localises to the secreted. Functionally, thiol protease that seems to be involved in the sexual development. This Dictyostelium discoideum (Social amoeba) protein is Gamete and mating-type specific protein A (gmsA).